The chain runs to 790 residues: E3 ubiquitin-protein ligase Jade-2 (790 aa).

Disordered stretches follow at residues 1-52 (MEEK…PSEV) and 111-130 (GPPA…SQPD). A phosphoserine mark is found at serine 9 and serine 15. The span at 9-28 (SISSDNSDTTDSHATSTSAS) shows a compositional bias: low complexity. 2 positions are modified to N6-acetyllysine: lysine 32 and lysine 38. At serine 117 the chain carries Phosphoserine. The PHD-type 1 zinc finger occupies 199 to 249 (DVVCDVCRSPEGEDGNEMVFCDKCNVCVHQACYGILKVPTGSWLCRTCALG). The C2HC pre-PHD-type zinc-finger motif lies at 251 to 285 (QPKCLLCPKRGGALKPTRSGTKWVHVSCALWIPEV). An N6-acetyllysine modification is found at lysine 298. The PHD-type 2 zinc-finger motif lies at 309 to 365 (LSCSLCKECTGTCIQCSMPSCVTAFHVTCAFDHGLEMRTILADNDEVKFKSFCQEHS). Disordered stretches follow at residues 361–386 (CQEH…AGED) and 578–777 (SFMR…PREA). A compositionally biased stretch (polar residues) spans 372-381 (EPTSEPTEPS). Basic residues predominate over residues 593 to 606 (KARGRTRLPAKKKP). A compositionally biased stretch (low complexity) spans 684 to 693 (AASVAADSDV). The segment covering 737 to 747 (ERPKVSLHFDT) has biased composition (basic and acidic residues). The segment covering 757-767 (EMSDSDVEAED) has biased composition (acidic residues).

It belongs to the JADE family. Component of the HBO1 complex composed at least of ING4 or ING5, MYST2/HBO1, MEAF6, and one of JADE1, JADE2 and JADE3. Interacts (via C-terminus) with KDM1A (via AOD/Tower domain).

The catalysed reaction is S-ubiquitinyl-[E2 ubiquitin-conjugating enzyme]-L-cysteine + [acceptor protein]-L-lysine = [E2 ubiquitin-conjugating enzyme]-L-cysteine + N(6)-ubiquitinyl-[acceptor protein]-L-lysine.. It functions in the pathway protein modification; protein ubiquitination. Scaffold subunit of some HBO1 complexes, which have a histone H4 acetyltransferase activity. Acts as an E3 ubiquitin-protein ligase mediating the ubiquitination and subsequent proteasomal degradation of target protein histone demethylase KDM1A. Also acts as a ubiquitin ligase E3 toward itself. Positive regulator of neurogenesis. This chain is E3 ubiquitin-protein ligase Jade-2 (JADE2), found in Homo sapiens (Human).